Here is a 285-residue protein sequence, read N- to C-terminus: Phosphate import ATP-binding protein PstB (285 aa).

The ABC transporter domain occupies 39-280; it reads LEVSDLQLWY…PAKKQTEDYI (242 aa). Residue 71 to 78 coordinates ATP; the sequence is GPSGCGKS.

It belongs to the ABC transporter superfamily. Phosphate importer (TC 3.A.1.7) family. The complex is composed of two ATP-binding proteins (PstB), two transmembrane proteins (PstC and PstA) and a solute-binding protein (PstS).

It localises to the cell inner membrane. It catalyses the reaction phosphate(out) + ATP + H2O = ADP + 2 phosphate(in) + H(+). In terms of biological role, part of the ABC transporter complex PstSACB involved in phosphate import. Responsible for energy coupling to the transport system. This chain is Phosphate import ATP-binding protein PstB, found in Alkalilimnicola ehrlichii (strain ATCC BAA-1101 / DSM 17681 / MLHE-1).